We begin with the raw amino-acid sequence, 223 residues long: Rho-related protein racE (223 aa).

18-25 (GDGAVGKT) contacts GTP. Residues 40-48 (YVPTVFENY) carry the Effector region motif. Residues 65 to 69 (DTAGQ) and 123 to 126 (TKID) each bind GTP. Positions 187-223 (GMDKKSQDGSSSASGVPSGDKPTKGKAGKKKSGCIIL) are disordered. Positions 210-223 (KGKAGKKKSGCIIL) are enriched in basic residues. Residue Cys220 is modified to Cysteine methyl ester. Cys220 carries S-geranylgeranyl cysteine lipidation. Positions 221 to 223 (IIL) are cleaved as a propeptide — removed in mature form.

It belongs to the small GTPase superfamily. Rho family. Interacts with rgaA.

Its subcellular location is the cell membrane. Functionally, specifically required for cytokinesis. The sequence is that of Rho-related protein racE (racE) from Dictyostelium discoideum (Social amoeba).